Consider the following 312-residue polypeptide: Ribosomal RNA small subunit methyltransferase H (312 aa).

S-adenosyl-L-methionine-binding positions include 36 to 38 (GGH), D55, F81, D103, and Q110.

It belongs to the methyltransferase superfamily. RsmH family.

It is found in the cytoplasm. The enzyme catalyses cytidine(1402) in 16S rRNA + S-adenosyl-L-methionine = N(4)-methylcytidine(1402) in 16S rRNA + S-adenosyl-L-homocysteine + H(+). In terms of biological role, specifically methylates the N4 position of cytidine in position 1402 (C1402) of 16S rRNA. In Marinomonas sp. (strain MWYL1), this protein is Ribosomal RNA small subunit methyltransferase H.